The chain runs to 230 residues: UPF0758 protein ABC2615 (230 aa).

Residues 104–226 (VISSPEDAAE…FISLKERGFF (123 aa)) form the MPN domain. Zn(2+) is bound by residues histidine 175, histidine 177, and aspartate 188. The short motif at 175-188 (HNHPSGDPSPSPED) is the JAMM motif element.

This sequence belongs to the UPF0758 family.

The polypeptide is UPF0758 protein ABC2615 (Shouchella clausii (strain KSM-K16) (Alkalihalobacillus clausii)).